A 351-amino-acid chain; its full sequence is Histidinol-phosphate aminotransferase (351 aa).

K221 is modified (N6-(pyridoxal phosphate)lysine).

It belongs to the class-II pyridoxal-phosphate-dependent aminotransferase family. Histidinol-phosphate aminotransferase subfamily. Homodimer. Requires pyridoxal 5'-phosphate as cofactor.

The enzyme catalyses L-histidinol phosphate + 2-oxoglutarate = 3-(imidazol-4-yl)-2-oxopropyl phosphate + L-glutamate. Its pathway is amino-acid biosynthesis; L-histidine biosynthesis; L-histidine from 5-phospho-alpha-D-ribose 1-diphosphate: step 7/9. In Staphylococcus epidermidis (strain ATCC 12228 / FDA PCI 1200), this protein is Histidinol-phosphate aminotransferase.